A 62-amino-acid chain; its full sequence is MEYSTGQHLLTIPEIKRYILRNNFSNEEHIVTESMLRNAFKAEYTKIMSNRNEAWTVTDYYD.

Its function is as follows. May participate in replication-dependent transcriptional events during viral growth. In Escherichia coli (Bacteriophage T4), this protein is Protein gp45.2 (45.2).